The sequence spans 376 residues: Chaperone protein DnaJ (376 aa).

The J domain maps to 5 to 70; that stretch reads DYYEVLGVAR…NKRRMYDSHG (66 aa). The CR-type zinc-finger motif lies at 132-209; it reads GVERRIEIPT…CHGNGRVEED (78 aa). The Zn(2+) site is built by Cys-145, Cys-148, Cys-161, Cys-164, Cys-183, Cys-186, Cys-197, and Cys-200. 4 CXXCXGXG motif repeats span residues 145 to 152, 161 to 168, 183 to 190, and 197 to 204; these read CGDCDGSG, CNVCHGRG, CHNCGGRG, and CKTCHGNG. The segment at 223 to 242 is disordered; it reads GDRIRLSGEGEAGPAGTPPG.

This sequence belongs to the DnaJ family. Homodimer. Requires Zn(2+) as cofactor.

The protein resides in the cytoplasm. Participates actively in the response to hyperosmotic and heat shock by preventing the aggregation of stress-denatured proteins and by disaggregating proteins, also in an autonomous, DnaK-independent fashion. Unfolded proteins bind initially to DnaJ; upon interaction with the DnaJ-bound protein, DnaK hydrolyzes its bound ATP, resulting in the formation of a stable complex. GrpE releases ADP from DnaK; ATP binding to DnaK triggers the release of the substrate protein, thus completing the reaction cycle. Several rounds of ATP-dependent interactions between DnaJ, DnaK and GrpE are required for fully efficient folding. Also involved, together with DnaK and GrpE, in the DNA replication of plasmids through activation of initiation proteins. In Stenotrophomonas maltophilia (strain R551-3), this protein is Chaperone protein DnaJ.